The primary structure comprises 642 residues: Influenza virus NS1A-binding protein homolog (642 aa).

The 68-residue stretch at 32–99 folds into the BTB domain; that stretch reads CDVRLQVCGH…AYTAQLKADK (68 aa). The region spanning 134–233 is the BACK domain; it reads CISYRNFASC…YYSADHKLLD (100 aa). A phosphoserine mark is found at S246, S277, S322, S336, and S338. The disordered stretch occupies residues 257-281; sequence KPPRENGHKQISGSSTGCLSSPNAS. The segment covering 265–281 has biased composition (polar residues); the sequence is KQISGSSTGCLSSPNAS. Kelch repeat units lie at residues 369 to 415, 416 to 463, 465 to 512, 513 to 559, 561 to 606, and 608 to 642; these read KLIA…VLMG, QLYV…ALNG, LYIV…ELGG, YLYI…VLDG, LFVG…TVGN, and IYAVGGFDGNEFLNTVEVYNPQSNEWSPYTKIFQF.

Belongs to the BTB-kelch protein family. As to quaternary structure, homodimer; through the BTB domain. Interacts with AHR/Aryl hydrocarbon receptor. Interacts (via BACK domain) with pre-mRNA-binding protein HNRNPK; the interaction is direct. Interacts (via BACK domain) with splicing factor PTBP1; the interaction is direct. Interacts (via Kelch repeats) with RNA polymerase POLR2A (via C-terminal domain). Interacts (via BACK domain) with splicing factor SNRPA; the interaction is indirect. Interacts (via Kelch repeats) with splicing factor SART1. Interacts (via BACK domain) with ALYREF; the interaction is indirect and likely plays a role in mRNA nuclear export. Interacts (via Kelch repeats) with KLHL20 (via Kelch repeats); this interaction blocks the assembly of Cul3-KLHL20 complex. As to expression, ubiquitous expression. In the heart, the highest expression is detected in the ventricles and the lowest in the atria. Expressed in dendrites and spines in neurons.

It localises to the cytoplasm. The protein resides in the cytoskeleton. Its subcellular location is the nucleus. In terms of biological role, involved in many cell functions, including pre-mRNA splicing, the aryl hydrocarbon receptor (AHR) pathway, F-actin organization and protein ubiquitination. Plays a role in the dynamic organization of the actin skeleton as a stabilizer of actin filaments by association with F-actin through Kelch repeats. Protects cells from cell death induced by actin destabilization. Functions as a modifier of the AHR/Aryl hydrocarbon receptor pathway increasing the concentration of AHR available to activate transcription. In addition, functions as a negative regulator of BCR(KLHL20) E3 ubiquitin ligase complex to prevent ubiquitin-mediated proteolysis of PML and DAPK1, two tumor suppressors. Inhibits pre-mRNA splicing (in vitro). May play a role in mRNA nuclear export. May play a role in cell cycle progression in the nucleus. The polypeptide is Influenza virus NS1A-binding protein homolog (Mus musculus (Mouse)).